Reading from the N-terminus, the 355-residue chain is MADKRAGTPEAAARPPPGLAREGDARTVPAARAREAGGRGSLHPAAGPGTAFPSPGRGEAASTATTPSLENGRVRDEAPETCGAEGLGTRAGASEKAEDANKEEGAIFKKEPAEEVEKQQEGEEKQEVAAEAQEGPRLLNLGALIVDPLEAIQWEAEAVSAQADRAYLPLERRFGRMHRLYLARRSFIIQNIPGFWVTAFLNHPQLSAMISPRDEDMLCYLMNLEVRELRHSRTGCKFKFRFWSNPYFQNKVIVKEYECRASGRVVSIATRIRWHWGQEPPALVHRNRDTVRSFFSWFSQHSLPEADRVAQIIKDDLWPNPLQYYLLGDRPCRARGGLARWPTETPSRPYGFQSG.

The disordered stretch occupies residues 1-131 (MADKRAGTPE…GEEKQEVAAE (131 aa)). Positions 93-128 (ASEKAEDANKEEGAIFKKEPAEEVEKQQEGEEKQEV) are enriched in basic and acidic residues.

This sequence belongs to the nucleosome assembly protein (NAP) family.

The polypeptide is Putative testis-specific Y-encoded-like protein 3 (TSPY26P) (Homo sapiens (Human)).